We begin with the raw amino-acid sequence, 342 residues long: S-adenosylmethionine:tRNA ribosyltransferase-isomerase (342 aa).

Belongs to the QueA family. As to quaternary structure, monomer.

The protein localises to the cytoplasm. It catalyses the reaction 7-aminomethyl-7-carbaguanosine(34) in tRNA + S-adenosyl-L-methionine = epoxyqueuosine(34) in tRNA + adenine + L-methionine + 2 H(+). The protein operates within tRNA modification; tRNA-queuosine biosynthesis. In terms of biological role, transfers and isomerizes the ribose moiety from AdoMet to the 7-aminomethyl group of 7-deazaguanine (preQ1-tRNA) to give epoxyqueuosine (oQ-tRNA). The protein is S-adenosylmethionine:tRNA ribosyltransferase-isomerase of Listeria monocytogenes serovar 1/2a (strain ATCC BAA-679 / EGD-e).